We begin with the raw amino-acid sequence, 320 residues long: Pantothenate kinase (320 aa).

96 to 103 is a binding site for ATP; it reads GSVAVGKS.

It belongs to the prokaryotic pantothenate kinase family.

The protein resides in the cytoplasm. The enzyme catalyses (R)-pantothenate + ATP = (R)-4'-phosphopantothenate + ADP + H(+). Its pathway is cofactor biosynthesis; coenzyme A biosynthesis; CoA from (R)-pantothenate: step 1/5. This chain is Pantothenate kinase, found in Brevibacillus brevis (strain 47 / JCM 6285 / NBRC 100599).